A 60-amino-acid polypeptide reads, in one-letter code: UPF0181 protein PMI1604 (60 aa).

This sequence belongs to the UPF0181 family.

The polypeptide is UPF0181 protein PMI1604 (Proteus mirabilis (strain HI4320)).